A 1314-amino-acid chain; its full sequence is Tetratricopeptide repeat protein 21A (1314 aa).

19 TPR repeats span residues 110–143 (STAL…SSGS), 214–247 (LPAL…DENN), 326–359 (ALVA…EENR), 494–527 (MEPL…DPTF), 529–561 (DAHL…NFQV), 565–598 (PLYH…PTSK), 616–649 (ASIL…FSGT), 721–754 (PHSS…NPHD), 755–788 (ASLV…SGQD), 790–821 (LCCE…DSGV), 831–863 (VKCL…QSRI), 883–916 (ASIC…SPTD), 918–950 (KVVL…EQTH), 951–984 (ERAA…APDN), 986–1018 (LVLN…SSRV), 1022–1055 (PGFN…STWG), 1195–1228 (EKSW…NKSC), 1230–1262 (RAYE…SHQA), and 1264–1297 (PAIG…HPKY).

This sequence belongs to the TTC21 family. As to quaternary structure, interacts with IFT20. Interacts with IFT52. Interacts with IFT140. Interacts with CEP78; regulating IFT20 stability and localization.

Its function is as follows. Intraflagellar transport (IFT)-associated protein required for spermatogenesis. Required for sperm flagellar formation and intraflagellar transport. This is Tetratricopeptide repeat protein 21A (Ttc21a) from Mus musculus (Mouse).